A 572-amino-acid chain; its full sequence is Proline--tRNA ligase (572 aa).

The protein belongs to the class-II aminoacyl-tRNA synthetase family. ProS type 1 subfamily. As to quaternary structure, homodimer.

The protein localises to the cytoplasm. The catalysed reaction is tRNA(Pro) + L-proline + ATP = L-prolyl-tRNA(Pro) + AMP + diphosphate. Functionally, catalyzes the attachment of proline to tRNA(Pro) in a two-step reaction: proline is first activated by ATP to form Pro-AMP and then transferred to the acceptor end of tRNA(Pro). As ProRS can inadvertently accommodate and process non-cognate amino acids such as alanine and cysteine, to avoid such errors it has two additional distinct editing activities against alanine. One activity is designated as 'pretransfer' editing and involves the tRNA(Pro)-independent hydrolysis of activated Ala-AMP. The other activity is designated 'posttransfer' editing and involves deacylation of mischarged Ala-tRNA(Pro). The misacylated Cys-tRNA(Pro) is not edited by ProRS. This Haemophilus influenzae (strain PittGG) protein is Proline--tRNA ligase.